Reading from the N-terminus, the 84-residue chain is Phosphoribosylformylglycinamidine synthase subunit PurS (84 aa).

This sequence belongs to the PurS family. As to quaternary structure, homodimer or homotetramer. Part of the FGAM synthase complex composed of 1 PurL, 1 PurQ and 2 PurS subunits.

It is found in the cytoplasm. The catalysed reaction is N(2)-formyl-N(1)-(5-phospho-beta-D-ribosyl)glycinamide + L-glutamine + ATP + H2O = 2-formamido-N(1)-(5-O-phospho-beta-D-ribosyl)acetamidine + L-glutamate + ADP + phosphate + H(+). The protein operates within purine metabolism; IMP biosynthesis via de novo pathway; 5-amino-1-(5-phospho-D-ribosyl)imidazole from N(2)-formyl-N(1)-(5-phospho-D-ribosyl)glycinamide: step 1/2. Functionally, part of the phosphoribosylformylglycinamidine synthase complex involved in the purines biosynthetic pathway. Catalyzes the ATP-dependent conversion of formylglycinamide ribonucleotide (FGAR) and glutamine to yield formylglycinamidine ribonucleotide (FGAM) and glutamate. The FGAM synthase complex is composed of three subunits. PurQ produces an ammonia molecule by converting glutamine to glutamate. PurL transfers the ammonia molecule to FGAR to form FGAM in an ATP-dependent manner. PurS interacts with PurQ and PurL and is thought to assist in the transfer of the ammonia molecule from PurQ to PurL. This Bacillus subtilis (strain 168) protein is Phosphoribosylformylglycinamidine synthase subunit PurS.